Consider the following 251-residue polypeptide: Probable transcriptional regulatory protein MSMEG_2940/MSMEI_2866 (251 aa).

Belongs to the TACO1 family.

It is found in the cytoplasm. The sequence is that of Probable transcriptional regulatory protein MSMEG_2940/MSMEI_2866 from Mycolicibacterium smegmatis (strain ATCC 700084 / mc(2)155) (Mycobacterium smegmatis).